A 429-amino-acid polypeptide reads, in one-letter code: MNHAKSEAVHAEALQHIVGGVNSPSRSYKAVGGGSPVAMVRGKGAYFWDVDGNRYIDYLAAYGPIVTGHGHPHIAKAITHAAENGTLFGTPTEYEVTFANMLKEAIPSMDKVRFNNSGTEAVMTTIRVARAYTGRTKIMKFAGCYHGHFDLVLVAAGSGPATLGTPDSAGVTTSTAEEVITVPFNNPEAFTEAMNTWGDEIAAILIEPIVGNFGIVEPNPGFLELVHATAKEKGALTIYDEVITAFRFHYGGAQNLLGLTPDLTALGKVIGGGLPIGAYGGRKEIMDTVAPLGPAYQAGTMAGNPASMQAGIACLEVLQTPGIYDEMDRLGGILEEGILAAAKEHGVTITLNRLKGALTIYFTDVKVENYEQAENSNGEIFGRFFKLMLEQGVNLAPSKYEAWFLTTEHTEADILETIKAVNYAFSQLS.

An N6-(pyridoxal phosphate)lysine modification is found at lysine 268.

It belongs to the class-III pyridoxal-phosphate-dependent aminotransferase family. HemL subfamily. Homodimer. Pyridoxal 5'-phosphate is required as a cofactor.

The protein resides in the cytoplasm. It carries out the reaction (S)-4-amino-5-oxopentanoate = 5-aminolevulinate. It participates in porphyrin-containing compound metabolism; protoporphyrin-IX biosynthesis; 5-aminolevulinate from L-glutamyl-tRNA(Glu): step 2/2. The protein is Glutamate-1-semialdehyde 2,1-aminomutase 1 of Lysinibacillus sphaericus (strain C3-41).